Consider the following 367-residue polypeptide: DNA replication and repair protein RecF (367 aa).

30 to 37 contacts ATP; that stretch reads GANGSGKT.

The protein belongs to the RecF family.

It is found in the cytoplasm. Its function is as follows. The RecF protein is involved in DNA metabolism; it is required for DNA replication and normal SOS inducibility. RecF binds preferentially to single-stranded, linear DNA. It also seems to bind ATP. The chain is DNA replication and repair protein RecF from Pseudomonas putida (strain ATCC 47054 / DSM 6125 / CFBP 8728 / NCIMB 11950 / KT2440).